We begin with the raw amino-acid sequence, 241 residues long: MLMDSLQEIICEKRTYTRLYHSHKHAYSQFLFPLEGSIDLETEGRQVKLNPDHFLYIPPQCEHRFRSIGRNECLVLDVPLHAMKIDEYRAGSGIEAALDPFWSSIRYLLTEEAKAGTANSLHMLVQYIKEKLQSHSYASIAYIHSHLFERLTIKKLAEIEHYHPAYYSSWFKKQTGKSPQNYIADLRLEEAKRMLMERNETLTVVSEALGFQNLSSFTRWFTKSTGMPPRLYRNTLYSDKK.

The 57-residue stretch at 22–78 (SHKHAYSQFLFPLEGSIDLETEGRQVKLNPDHFLYIPPQCEHRFRSIGRNECLVLDV) folds into the Cupin type-2 domain. The 99-residue stretch at 137-235 (YASIAYIHSH…GMPPRLYRNT (99 aa)) folds into the HTH araC/xylS-type domain. 2 consecutive DNA-binding regions (H-T-H motif) follow at residues 154-175 (KKLAEIEHYHPAYYSSWFKKQT) and 202-225 (LTVVSEALGFQNLSSFTRWFTKST).

This is an uncharacterized protein from Bacillus subtilis (strain 168).